The primary structure comprises 1194 residues: ATP-dependent RNA helicase DHX30 (1194 aa).

The segment covering 1–10 has biased composition (basic and acidic residues); the sequence is MFSLDSFRKD. The segment at 1–27 is disordered; sequence MFSLDSFRKDRAQHRQRQCKLPPPRLP. Ser6 and Arg15 each carry phosphoserine. The 69-residue stretch at 53–121 folds into the DRBM domain; it reads PKNLLNSVIG…QAAAAACQLF (69 aa). Residues 150-199 are disordered; sequence ADSWWRPEPTMPPTSWRQLNPESIRPGGPGGLSRSLGREEEEDEEEELEE. Residues 188–199 show a composition bias toward acidic residues; sequence EEEEDEEEELEE. 2 positions are modified to phosphoserine: Ser226 and Ser380. Residues 444 to 612 enclose the Helicase ATP-binding domain; that stretch reads LNAIEQHPVV…FGGCPVIKVP (169 aa). Residue 457 to 464 participates in ATP binding; that stretch reads GDTGCGKT. Positions 559 to 562 match the DEAH box motif; that stretch reads DEVH. Positions 654–827 constitute a Helicase C-terminal domain; sequence LVTDLVLHID…NLVLQAKIHM (174 aa).

The protein belongs to the DEAD box helicase family. DEAH subfamily. In terms of assembly, identified in a complex with TFAM and SSBP1. Interacts with AGO1 and AGO2. Interacts (via N-terminus) with ZC3HAV1 (via N-terminal domain) in an RNA-independent manner. Found in a complex with GRSF1, DDX28, FASTKD2 and FASTKD5. Post-translationally, phosphorylated on Ser-15.

Its subcellular location is the cytoplasm. It localises to the mitochondrion. The protein localises to the mitochondrion matrix. It is found in the mitochondrion nucleoid. It catalyses the reaction ATP + H2O = ADP + phosphate + H(+). In terms of biological role, RNA-dependent helicase. Plays an important role in the assembly of the mitochondrial large ribosomal subunit. Required for optimal function of the zinc-finger antiviral protein ZC3HAV1. Associates with mitochondrial DNA. Involved in nervous system development and differentiation through its involvement in the up-regulation of a number of genes which are required for neurogenesis, including GSC, NCAM1, neurogenin, and NEUROD. In Homo sapiens (Human), this protein is ATP-dependent RNA helicase DHX30 (DHX30).